The sequence spans 142 residues: Large ribosomal subunit protein bL17 (142 aa).

The protein belongs to the bacterial ribosomal protein bL17 family. As to quaternary structure, part of the 50S ribosomal subunit. Contacts protein L32.

The sequence is that of Large ribosomal subunit protein bL17 from Wolbachia sp. subsp. Brugia malayi (strain TRS).